The sequence spans 239 residues: Phosphoribosylaminoimidazole-succinocarboxamide synthase (239 aa).

Belongs to the SAICAR synthetase family.

It catalyses the reaction 5-amino-1-(5-phospho-D-ribosyl)imidazole-4-carboxylate + L-aspartate + ATP = (2S)-2-[5-amino-1-(5-phospho-beta-D-ribosyl)imidazole-4-carboxamido]succinate + ADP + phosphate + 2 H(+). Its pathway is purine metabolism; IMP biosynthesis via de novo pathway; 5-amino-1-(5-phospho-D-ribosyl)imidazole-4-carboxamide from 5-amino-1-(5-phospho-D-ribosyl)imidazole-4-carboxylate: step 1/2. The protein is Phosphoribosylaminoimidazole-succinocarboxamide synthase of Acinetobacter baylyi (strain ATCC 33305 / BD413 / ADP1).